Here is a 428-residue protein sequence, read N- to C-terminus: Serine--tRNA ligase (428 aa).

Position 235–237 (235–237 (TAE)) interacts with L-serine. 266-268 (RSE) contributes to the ATP binding site. E289 provides a ligand contact to L-serine. Residue 353 to 356 (EISS) coordinates ATP. S389 serves as a coordination point for L-serine.

Belongs to the class-II aminoacyl-tRNA synthetase family. Type-1 seryl-tRNA synthetase subfamily. In terms of assembly, homodimer. The tRNA molecule binds across the dimer.

It is found in the cytoplasm. It carries out the reaction tRNA(Ser) + L-serine + ATP = L-seryl-tRNA(Ser) + AMP + diphosphate + H(+). It catalyses the reaction tRNA(Sec) + L-serine + ATP = L-seryl-tRNA(Sec) + AMP + diphosphate + H(+). The protein operates within aminoacyl-tRNA biosynthesis; selenocysteinyl-tRNA(Sec) biosynthesis; L-seryl-tRNA(Sec) from L-serine and tRNA(Sec): step 1/1. Its function is as follows. Catalyzes the attachment of serine to tRNA(Ser). Is also able to aminoacylate tRNA(Sec) with serine, to form the misacylated tRNA L-seryl-tRNA(Sec), which will be further converted into selenocysteinyl-tRNA(Sec). The chain is Serine--tRNA ligase from Shewanella sp. (strain ANA-3).